Here is a 639-residue protein sequence, read N- to C-terminus: Tetracycline resistance protein TetM from transposon Tn5251 (639 aa).

Positions 1-242 constitute a tr-type G domain; that stretch reads MKIINIGVLA…VITNKFYSST (242 aa). GTP is bound by residues 10 to 17, 74 to 78, and 128 to 131; these read AHVDAGKT, DTPGH, and NKID.

Belongs to the TRAFAC class translation factor GTPase superfamily. Classic translation factor GTPase family. TetM/TetO subfamily.

In terms of biological role, abolishes the inhibitory effect of tetracyclin on protein synthesis by a non-covalent modification of the ribosomes. The sequence is that of Tetracycline resistance protein TetM from transposon Tn5251 (tetM(5251)) from Streptococcus pneumoniae.